A 464-amino-acid polypeptide reads, in one-letter code: Protein phosphatase 2C homolog 2 (464 aa).

The region spanning alanine 23 to leucine 292 is the PPM-type phosphatase domain. Residues aspartate 62, glycine 63, aspartate 234, and aspartate 283 each contribute to the Mn(2+) site. Positions aspartate 174 to histidine 355 are interaction with IRE1. Disordered stretches follow at residues serine 361–proline 398 and glutamine 434–glutamine 464. The span at aspartate 366–asparagine 384 shows a compositional bias: acidic residues. Phosphothreonine is present on residues threonine 376 and threonine 380. Over residues aspartate 386–serine 396 the composition is skewed to polar residues. The segment covering proline 448–alanine 458 has biased composition (basic and acidic residues).

The protein belongs to the PP2C family. In terms of assembly, interacts with IRE1 (when phosphorylated); the interaction is direct and serves to attenuate the endoplasmic reticulum unfolded protein response. Interacts (when phosphorylated) with RAD53 (via domain FHA 1); the interaction is direct and serves to regulate DNA damage checkpoint signaling. Interacts with the ATG17-ATG29-ATG31 and ATG1-ATG13 supercomplex; to regulate induction of autophagy. The cofactor is Mg(2+). Mn(2+) is required as a cofactor.

It localises to the nucleus. It is found in the cytoplasm. Its subcellular location is the cytosol. The catalysed reaction is O-phospho-L-seryl-[protein] + H2O = L-seryl-[protein] + phosphate. The enzyme catalyses O-phospho-L-threonyl-[protein] + H2O = L-threonyl-[protein] + phosphate. Its function is as follows. Dephosphorylating regulator for many key proteins. Dephosphorylates the cell cycle master regulator CDC28/cyclin-dependent kinase 1; its activity appears redundant with phosphatase PTC3. Dephosphorylates HOG1 at 'Thr-171', to attenuate activation of the stress-activated p38MAPK cascade; its activity appears redundant with phosphatase PTC3. Positively regulates both nonselective macroautophagy as well as the selective cytoplasm-to-vacuole (cvt) autophagy pathway and the genotoxin-induced targeted autophagy (GTA) pathway, possibly by dephosphorylating ATG13 to enable the interaction between the ATG17-ATG29-ATG31 and ATG1-ATG13 complexes; its activity appears redundant with phosphatase PTC3. Dephosphorylates RAD53, to regulate DNA damage checkpoint signaling. Dephosphorylates IRE1, to negatively regulate the endoplasmic reticulum unfolded protein response. The polypeptide is Protein phosphatase 2C homolog 2 (PTC2) (Saccharomyces cerevisiae (strain ATCC 204508 / S288c) (Baker's yeast)).